Here is a 245-residue protein sequence, read N- to C-terminus: MMILKIGGSVITDKSAYRTARTYAIRSIVKVLSGIEDLVCVVHGGGSFGHIKAMEFGLPGPKNPRSSIGYSIVHRDMENLDLMVIDAMIEMGMRPISVPISALRYDGRFDYTPLIRYIDAGFVPVSYGDVYIKDEHSYGIYSGDDIMADMAELLKPDVAVFLTDVDGIYSKDPKRNPDAVLLRDIDTNITFDRVQNDVTGGIGKKFESMVKMKSSVKNGVYLINGNHPERIGDIGKESFIGTVIR.

5-9 (KIGGS) is a binding site for ATP. Residue G45 coordinates substrate. G46 contributes to the ATP binding site. Substrate-binding residues include H50 and G143. Residues D164, 169–174 (YSKDPK), G201, and K205 each bind ATP.

This sequence belongs to the isopentenyl phosphate kinase family. In terms of assembly, homodimer.

It catalyses the reaction isopentenyl phosphate + ATP = isopentenyl diphosphate + ADP. Catalyzes the formation of isopentenyl diphosphate (IPP), the building block of all isoprenoids. Has lower activity with isopentenyl thiolophosphate (ISP). Has low activity with dimethylallyl phosphate (DMAP), 1-butyl phosphate (BP) and 3-buten-1-yl phosphate (BEP). Has no significant activity with geranyl phosphate (in vitro). The protein is Isopentenyl phosphate kinase of Thermoplasma acidophilum (strain ATCC 25905 / DSM 1728 / JCM 9062 / NBRC 15155 / AMRC-C165).